Reading from the N-terminus, the 85-residue chain is uncharacterized protein (85 aa).

This sequence belongs to the ycf76 family.

The protein localises to the plastid. It localises to the chloroplast. This is an uncharacterized protein from Oryza sativa subsp. japonica (Rice).